A 156-amino-acid chain; its full sequence is Cell division protein SepF (156 aa).

The span at 23–36 shows a compositional bias: basic and acidic residues; that stretch reads SYEKEQTDMKKQQD. The segment at 23–49 is disordered; sequence SYEKEQTDMKKQQDPPEQQDVTFPKAQ.

Belongs to the SepF family. In terms of assembly, homodimer. Interacts with FtsZ.

Its subcellular location is the cytoplasm. In terms of biological role, cell division protein that is part of the divisome complex and is recruited early to the Z-ring. Probably stimulates Z-ring formation, perhaps through the cross-linking of FtsZ protofilaments. Its function overlaps with FtsA. This Bacillus anthracis (strain CDC 684 / NRRL 3495) protein is Cell division protein SepF.